The following is a 528-amino-acid chain: tRNA-2-methylthio-N(6)-dimethylallyladenosine synthase (528 aa).

The MTTase N-terminal domain maps to 19–134 (RTYEVRTYGC…LPTLLERARH (116 aa)). [4Fe-4S] cluster is bound by residues C28, C63, C97, C171, C175, and C178. Positions 157–387 (RDEIASGWVS…TALQERISHE (231 aa)) constitute a Radical SAM core domain. The TRAM domain maps to 390–460 (QRVVGRTVEV…PFHLIADSVD (71 aa)).

This sequence belongs to the methylthiotransferase family. MiaB subfamily. Monomer. [4Fe-4S] cluster is required as a cofactor.

Its subcellular location is the cytoplasm. It catalyses the reaction N(6)-dimethylallyladenosine(37) in tRNA + (sulfur carrier)-SH + AH2 + 2 S-adenosyl-L-methionine = 2-methylsulfanyl-N(6)-dimethylallyladenosine(37) in tRNA + (sulfur carrier)-H + 5'-deoxyadenosine + L-methionine + A + S-adenosyl-L-homocysteine + 2 H(+). Catalyzes the methylthiolation of N6-(dimethylallyl)adenosine (i(6)A), leading to the formation of 2-methylthio-N6-(dimethylallyl)adenosine (ms(2)i(6)A) at position 37 in tRNAs that read codons beginning with uridine. This Clavibacter michiganensis subsp. michiganensis (strain NCPPB 382) protein is tRNA-2-methylthio-N(6)-dimethylallyladenosine synthase.